The primary structure comprises 284 residues: Phosphatidylglycerol--prolipoprotein diacylglyceryl transferase (284 aa).

A run of 7 helical transmembrane segments spans residues 19–39 (ISFYWYGMMYVLSFIFAMWFL), 60–80 (LLYLNFLGVVIGGRIGYVLFY), 98–118 (GGMSFHGGLIGVIISIMWFSY), 130–150 (FIVPAVPVGLGLGRLGNFING), 199–219 (QLYEMILEGIVLFVVIYIFSC), 225–245 (GSISGLFLLLYGLFRIIIEFF), and 258–278 (FITLGQVLSFPMVIFGFIIMY). Arginine 143 provides a ligand contact to a 1,2-diacyl-sn-glycero-3-phospho-(1'-sn-glycerol).

This sequence belongs to the Lgt family.

It localises to the cell inner membrane. The enzyme catalyses L-cysteinyl-[prolipoprotein] + a 1,2-diacyl-sn-glycero-3-phospho-(1'-sn-glycerol) = an S-1,2-diacyl-sn-glyceryl-L-cysteinyl-[prolipoprotein] + sn-glycerol 1-phosphate + H(+). Its pathway is protein modification; lipoprotein biosynthesis (diacylglyceryl transfer). In terms of biological role, catalyzes the transfer of the diacylglyceryl group from phosphatidylglycerol to the sulfhydryl group of the N-terminal cysteine of a prolipoprotein, the first step in the formation of mature lipoproteins. The chain is Phosphatidylglycerol--prolipoprotein diacylglyceryl transferase from Blochmanniella floridana.